The primary structure comprises 146 residues: Large ribosomal subunit protein bL9 (146 aa).

The protein belongs to the bacterial ribosomal protein bL9 family.

Functionally, binds to the 23S rRNA. The polypeptide is Large ribosomal subunit protein bL9 (Nautilia profundicola (strain ATCC BAA-1463 / DSM 18972 / AmH)).